We begin with the raw amino-acid sequence, 1299 residues long: Cilia- and flagella-associated protein 251 (1299 aa).

Residues 1–351 form a disordered region; it reads MSDTEENPLE…SQKPEDILAQ (351 aa). Acidic residues-rich tracts occupy residues 17–45, 91–162, and 176–189; these read EMEE…EEEE, EKEE…EEDA, and ESQE…EWVE. The span at 190–199 shows a compositional bias: basic and acidic residues; the sequence is KEEQREGEEV. The segment covering 212 to 228 has biased composition (acidic residues); the sequence is EEEGWEEEKSGEEEKSE. Residues 229–257 show a composition bias toward basic and acidic residues; that stretch reads ESERSKERGGEEEGQEKEEAEHEGEREEG. Over residues 269–280 the composition is skewed to acidic residues; the sequence is REEEEEEEDTET. 2 stretches are compositionally biased toward basic and acidic residues: residues 281–297 and 331–351; these read TETK…EKQN and NSMK…ILAQ. 14 WD repeats span residues 484-526, 534-574, 585-624, 643-678, 681-741, 745-785, 791-828, 838-874, 881-924, 935-975, 981-1027, 1033-1071, 1109-1149, and 1169-1209; these read PVHT…IWKW, ACTL…CWFE, VLTE…VWDI, PRKL…FYDH, SVVN…VYHM, GTKL…VWDF, LFSR…ILDA, PFKY…MVVV, WEYL…EYNL, LDVH…LFNA, RKTL…ILPV, KTCA…QWKI, YFYY…FYPS, and GKLI…GYTN.

The protein resides in the cytoplasm. Its subcellular location is the cytoskeleton. It localises to the cilium axoneme. It is found in the cell projection. The protein localises to the cilium. The protein resides in the flagellum. Involved in spermatozoa motility. May also regulate cilium motility through its role in the assembly of the axonemal radial spokes. The chain is Cilia- and flagella-associated protein 251 from Mus musculus (Mouse).